The chain runs to 382 residues: Serine/threonine-protein phosphatase 2A activator 2 (382 aa).

Residues 363-382 (SHKGVPTLGNRPGIKPIPFD) form a disordered region.

It belongs to the PTPA-type PPIase family.

The protein localises to the cytoplasm. The enzyme catalyses [protein]-peptidylproline (omega=180) = [protein]-peptidylproline (omega=0). Its function is as follows. PPIases accelerate the folding of proteins. It catalyzes the cis-trans isomerization of proline imidic peptide bonds in oligopeptides. Acts as a regulatory subunit for PP2A-like phosphatases modulating their activity or substrate specificity, probably by inducing a conformational change in the catalytic subunit, a direct target of the PPIase. Can reactivate inactive phosphatase PP2A-phosphatase methylesterase complexes (PP2Ai) in presence of ATP and Mg(2+) by dissociating the inactive form from the complex. This is Serine/threonine-protein phosphatase 2A activator 2 (RRD2) from Cryptococcus neoformans var. neoformans serotype D (strain B-3501A) (Filobasidiella neoformans).